The primary structure comprises 244 residues: 5-oxoprolinase subunit A (244 aa).

Belongs to the LamB/PxpA family. As to quaternary structure, forms a complex composed of PxpA, PxpB and PxpC.

It carries out the reaction 5-oxo-L-proline + ATP + 2 H2O = L-glutamate + ADP + phosphate + H(+). Functionally, catalyzes the cleavage of 5-oxoproline to form L-glutamate coupled to the hydrolysis of ATP to ADP and inorganic phosphate. In Shigella flexneri serotype 5b (strain 8401), this protein is 5-oxoprolinase subunit A.